Here is a 62-residue protein sequence, read N- to C-terminus: uncharacterized protein (62 aa).

Its subcellular location is the mitochondrion. This is an uncharacterized protein from Marchantia polymorpha (Common liverwort).